Consider the following 226-residue polypeptide: SPI-1 type 3 secretion system stator protein (226 aa).

As to quaternary structure, the core secretion machinery of the T3SS is composed of approximately 20 different proteins, including cytoplasmic components, a base, an export apparatus and a needle. This subunit is part of the cytosolic complex. Interacts directly with InvC/SctN1 (T3SS-1 ATPase) and SpaO/SctQ (the major sorting platform component).

Its subcellular location is the cytoplasm. Functionally, component of the type III secretion system (T3SS), also called injectisome, which is used to inject bacterial effector proteins into eukaryotic host cells. Acts as a regulator of the InvC/SctN1 ATPase activity. Required for invasion and secretion. The polypeptide is SPI-1 type 3 secretion system stator protein (Salmonella typhimurium (strain SL1344)).